The chain runs to 141 residues: LOB domain-containing protein 34 (141 aa).

The 104-residue stretch at 16-119 (NQCAACRHQR…SPLNYVAPVI (104 aa)) folds into the LOB domain.

Belongs to the LOB domain-containing protein family.

The chain is LOB domain-containing protein 34 (LBD34) from Arabidopsis thaliana (Mouse-ear cress).